We begin with the raw amino-acid sequence, 203 residues long: Proteasome subunit beta 1 (203 aa).

A propeptide spans 1 to 7 (MTEKLKG) (removed in mature form; by autocatalysis). Thr-8 functions as the Nucleophile in the catalytic mechanism.

It belongs to the peptidase T1B family. As to quaternary structure, the 20S proteasome core is composed of 14 alpha and 14 beta subunits that assemble into four stacked heptameric rings, resulting in a barrel-shaped structure. The two inner rings, each composed of seven catalytic beta subunits, are sandwiched by two outer rings, each composed of seven alpha subunits. The catalytic chamber with the active sites is on the inside of the barrel. Has a gated structure, the ends of the cylinder being occluded by the N-termini of the alpha-subunits. Is capped at one or both ends by the proteasome regulatory ATPase, PAN.

It localises to the cytoplasm. It carries out the reaction Cleavage of peptide bonds with very broad specificity.. Its activity is regulated as follows. The formation of the proteasomal ATPase PAN-20S proteasome complex, via the docking of the C-termini of PAN into the intersubunit pockets in the alpha-rings, triggers opening of the gate for substrate entry. Interconversion between the open-gate and close-gate conformations leads to a dynamic regulation of the 20S proteasome proteolysis activity. Component of the proteasome core, a large protease complex with broad specificity involved in protein degradation. The sequence is that of Proteasome subunit beta 1 from Thermococcus kodakarensis (strain ATCC BAA-918 / JCM 12380 / KOD1) (Pyrococcus kodakaraensis (strain KOD1)).